We begin with the raw amino-acid sequence, 214 residues long: ATP phosphoribosyltransferase (214 aa).

This sequence belongs to the ATP phosphoribosyltransferase family. Short subfamily. As to quaternary structure, heteromultimer composed of HisG and HisZ subunits.

It is found in the cytoplasm. The enzyme catalyses 1-(5-phospho-beta-D-ribosyl)-ATP + diphosphate = 5-phospho-alpha-D-ribose 1-diphosphate + ATP. It participates in amino-acid biosynthesis; L-histidine biosynthesis; L-histidine from 5-phospho-alpha-D-ribose 1-diphosphate: step 1/9. In terms of biological role, catalyzes the condensation of ATP and 5-phosphoribose 1-diphosphate to form N'-(5'-phosphoribosyl)-ATP (PR-ATP). Has a crucial role in the pathway because the rate of histidine biosynthesis seems to be controlled primarily by regulation of HisG enzymatic activity. This Streptococcus gordonii (strain Challis / ATCC 35105 / BCRC 15272 / CH1 / DL1 / V288) protein is ATP phosphoribosyltransferase.